Reading from the N-terminus, the 310-residue chain is MASNAKRRALEPERLPERNEEEEDDMEGDNSDESDDIEDDESEEEEEVNEEVNIDFEAYTISDTDSEGIKKLLKQLFLKAHVNISELTDLLIQQNHIGSAIKQAESQEDSDDDDDDDVDHVFGFISLVNLTERKGTSCVEQIKELILTRCEENCEQSMVEQFDKVLNNNSKPVGFLLSERFINVPAQIALPMHQQLQKELADTQRTNKPCGKCYYYLILSKTFVEAAKTSKGRVGSQAKEELMFANAEDEFFYEKALLKFSYSVQEESDTQLGGRWSFSDVPMKPLRTVMLVPADRMNSIMDKFKEYLSV.

The disordered stretch occupies residues 1-59; it reads MASNAKRRALEPERLPERNEEEEDDMEGDNSDESDDIEDDESEEEEEVNEEVNIDFEAY. Residues 8-18 show a composition bias toward basic and acidic residues; it reads RALEPERLPER. Positions 19–54 are enriched in acidic residues; the sequence is NEEEEDDMEGDNSDESDDIEDDESEEEEEVNEEVNI.

The protein belongs to the BCP1 family.

It localises to the nucleus. The protein localises to the cytoplasm. The protein resides in the cytoskeleton. Its subcellular location is the microtubule organizing center. It is found in the centrosome. It localises to the centriole. The protein localises to the spindle pole. In terms of biological role, during interphase, required for microtubule organizing and anchoring activities. During mitosis, required for the organization and stabilization of the spindle pole. May promote cell cycle arrest and DNA repair. This is Protein BCCIP homolog (bccip) from Xenopus tropicalis (Western clawed frog).